The chain runs to 312 residues: Homoserine O-succinyltransferase (312 aa).

The Acyl-thioester intermediate role is filled by C142. Substrate contacts are provided by K163 and S192. H235 (proton acceptor) is an active-site residue. E237 is an active-site residue. R249 lines the substrate pocket.

This sequence belongs to the MetA family.

Its subcellular location is the cytoplasm. The catalysed reaction is L-homoserine + succinyl-CoA = O-succinyl-L-homoserine + CoA. Its pathway is amino-acid biosynthesis; L-methionine biosynthesis via de novo pathway; O-succinyl-L-homoserine from L-homoserine: step 1/1. Transfers a succinyl group from succinyl-CoA to L-homoserine, forming succinyl-L-homoserine. The protein is Homoserine O-succinyltransferase of Shewanella halifaxensis (strain HAW-EB4).